We begin with the raw amino-acid sequence, 430 residues long: Probable aspartic-type endopeptidase ARB_07403 (430 aa).

The N-terminal stretch at 1-17 (MHVSTLLVAVLLPLALS) is a signal peptide. A propeptide spans 18-87 (KPTPRKKTGS…SKATAGSGKE (70 aa)) (activation peptide). A disordered region spans residues 66–105 (YHPQHISKLPGNSKATAGSGKEGVESQDEKGEVVNNPTNH). Basic and acidic residues predominate over residues 87–97 (EGVESQDEKGE). The 319-residue stretch at 109-427 (FLSPVTIGGQ…DQRGPSISLA (319 aa)) folds into the Peptidase A1 domain. Residue D125 is part of the active site. N306 carries N-linked (GlcNAc...) asparagine glycosylation. D314 is a catalytic residue.

It belongs to the peptidase A1 family.

Its subcellular location is the secreted. In terms of biological role, probable secreted aspartic-type endopeptidase which contributes to virulence. The sequence is that of Probable aspartic-type endopeptidase ARB_07403 from Arthroderma benhamiae (strain ATCC MYA-4681 / CBS 112371) (Trichophyton mentagrophytes).